The sequence spans 56 residues: Large ribosomal subunit protein bL33B (56 aa).

The protein belongs to the bacterial ribosomal protein bL33 family.

In Cutibacterium acnes (strain DSM 16379 / KPA171202) (Propionibacterium acnes), this protein is Large ribosomal subunit protein bL33B.